A 134-amino-acid chain; its full sequence is Phosphoribosyl-AMP cyclohydrolase (134 aa).

D77 is a Mg(2+) binding site. C78 contacts Zn(2+). Mg(2+)-binding residues include D79 and D81. The Zn(2+) site is built by C95 and C102.

This sequence belongs to the PRA-CH family. In terms of assembly, homodimer. Requires Mg(2+) as cofactor. It depends on Zn(2+) as a cofactor.

The protein localises to the cytoplasm. The catalysed reaction is 1-(5-phospho-beta-D-ribosyl)-5'-AMP + H2O = 1-(5-phospho-beta-D-ribosyl)-5-[(5-phospho-beta-D-ribosylamino)methylideneamino]imidazole-4-carboxamide. It participates in amino-acid biosynthesis; L-histidine biosynthesis; L-histidine from 5-phospho-alpha-D-ribose 1-diphosphate: step 3/9. In terms of biological role, catalyzes the hydrolysis of the adenine ring of phosphoribosyl-AMP. This Pseudomonas aeruginosa (strain UCBPP-PA14) protein is Phosphoribosyl-AMP cyclohydrolase.